The following is a 419-amino-acid chain: UDP-N-acetylglucosamine 1-carboxyvinyltransferase (419 aa).

22–23 (KN) lines the phosphoenolpyruvate pocket. Arg-93 contributes to the UDP-N-acetyl-alpha-D-glucosamine binding site. Cys-117 serves as the catalytic Proton donor. 2-(S-cysteinyl)pyruvic acid O-phosphothioketal is present on Cys-117. 2 residues coordinate UDP-N-acetyl-alpha-D-glucosamine: Asp-307 and Ile-329.

Belongs to the EPSP synthase family. MurA subfamily.

It is found in the cytoplasm. It carries out the reaction phosphoenolpyruvate + UDP-N-acetyl-alpha-D-glucosamine = UDP-N-acetyl-3-O-(1-carboxyvinyl)-alpha-D-glucosamine + phosphate. The protein operates within cell wall biogenesis; peptidoglycan biosynthesis. In terms of biological role, cell wall formation. Adds enolpyruvyl to UDP-N-acetylglucosamine. This is UDP-N-acetylglucosamine 1-carboxyvinyltransferase from Shewanella woodyi (strain ATCC 51908 / MS32).